We begin with the raw amino-acid sequence, 543 residues long: CTP synthase (543 aa).

The interval 1–267 (MKQTKYIFVT…LSPIAEILDL (267 aa)) is amidoligase domain. Ser15 is a CTP binding site. Residue Ser15 participates in UTP binding. ATP contacts are provided by residues 16–21 (SLGKGI) and Asp73. Mg(2+) is bound by residues Asp73 and Glu141. Residues 148 to 150 (DIE), 188 to 193 (KTKPTQ), and Lys224 each bind CTP. UTP-binding positions include 188–193 (KTKPTQ) and Lys224. Residues 292–543 (KIAFVGKYVD…IKAAINYEDN (252 aa)) form the Glutamine amidotransferase type-1 domain. An L-glutamine-binding site is contributed by Gly354. The active-site Nucleophile; for glutamine hydrolysis is the Cys381. L-glutamine contacts are provided by residues 382-385 (LGMQ), Glu405, and Arg473. Residues His516 and Glu518 contribute to the active site.

Belongs to the CTP synthase family. As to quaternary structure, homotetramer.

The catalysed reaction is UTP + L-glutamine + ATP + H2O = CTP + L-glutamate + ADP + phosphate + 2 H(+). The enzyme catalyses L-glutamine + H2O = L-glutamate + NH4(+). It catalyses the reaction UTP + NH4(+) + ATP = CTP + ADP + phosphate + 2 H(+). It functions in the pathway pyrimidine metabolism; CTP biosynthesis via de novo pathway; CTP from UDP: step 2/2. Allosterically activated by GTP, when glutamine is the substrate; GTP has no effect on the reaction when ammonia is the substrate. The allosteric effector GTP functions by stabilizing the protein conformation that binds the tetrahedral intermediate(s) formed during glutamine hydrolysis. Inhibited by the product CTP, via allosteric rather than competitive inhibition. Catalyzes the ATP-dependent amination of UTP to CTP with either L-glutamine or ammonia as the source of nitrogen. Regulates intracellular CTP levels through interactions with the four ribonucleotide triphosphates. In Campylobacter jejuni subsp. jejuni serotype O:2 (strain ATCC 700819 / NCTC 11168), this protein is CTP synthase.